Reading from the N-terminus, the 463-residue chain is L-2-hydroxyglutarate dehydrogenase, mitochondrial (463 aa).

A mitochondrion-targeting transit peptide spans 1-51 (MVPALRYLVGACGRARGLFAGGSPGACGFASGRPRPLCGGSRSASTSSFDI). N6-acetyllysine occurs at positions 104, 155, and 173.

Belongs to the L2HGDH family. FAD serves as cofactor. As to expression, widely expressed. Highly expressed in brain, testis and muscle. Expressed to a lower extent in lymphocytes, fibroblasts, keratinocytes, placenta, bladder, small intestine, liver and bone marrow.

The protein resides in the mitochondrion. The enzyme catalyses (S)-2-hydroxyglutarate + A = 2-oxoglutarate + AH2. The sequence is that of L-2-hydroxyglutarate dehydrogenase, mitochondrial (L2HGDH) from Homo sapiens (Human).